Consider the following 1014-residue polypeptide: Isoleucine--tRNA ligase (1014 aa).

The 'HIGH' region signature appears at 48-58; sequence PTANGRPGIHH. A 'KMSKS' region motif is present at residues 628–632; sequence KMSKS. K631 provides a ligand contact to ATP.

This sequence belongs to the class-I aminoacyl-tRNA synthetase family. IleS type 2 subfamily. In terms of assembly, monomer. The cofactor is Zn(2+).

The protein localises to the cytoplasm. It catalyses the reaction tRNA(Ile) + L-isoleucine + ATP = L-isoleucyl-tRNA(Ile) + AMP + diphosphate. In terms of biological role, catalyzes the attachment of isoleucine to tRNA(Ile). As IleRS can inadvertently accommodate and process structurally similar amino acids such as valine, to avoid such errors it has two additional distinct tRNA(Ile)-dependent editing activities. One activity is designated as 'pretransfer' editing and involves the hydrolysis of activated Val-AMP. The other activity is designated 'posttransfer' editing and involves deacylation of mischarged Val-tRNA(Ile). The chain is Isoleucine--tRNA ligase from Dehalococcoides mccartyi (strain CBDB1).